Consider the following 28-residue polypeptide: Small integral membrane protein 47 (28 aa).

A helical transmembrane segment spans residues 7–24; sequence VTLAMALFTILTSIYFFN.

Its subcellular location is the membrane. The chain is Small integral membrane protein 47 from Homo sapiens (Human).